Reading from the N-terminus, the 412-residue chain is Translation initiation factor 2 subunit gamma (412 aa).

The tr-type G domain maps to 8–205 (QAEMNIGMVG…AMYEHFEPPE (198 aa)). The segment at 17–24 (GHVDHGKT) is G1. Asp-20, Thr-24, Gly-45, and Ser-47 together coordinate Mg(2+). 20–25 (DHGKTT) serves as a coordination point for GTP. The tract at residues 45 to 49 (GISIR) is G2. The Zn(2+) site is built by Cys-60, Cys-63, Cys-72, and Cys-75. The segment at 89-92 (DSPG) is G3. GTP is bound by residues 145-148 (NKID) and 183-185 (SAQ). The interval 145–148 (NKID) is G4. The tract at residues 183–185 (SAQ) is G5.

This sequence belongs to the TRAFAC class translation factor GTPase superfamily. Classic translation factor GTPase family. EIF2G subfamily. Heterotrimer composed of an alpha, a beta and a gamma chain. Mg(2+) is required as a cofactor.

It carries out the reaction GTP + H2O = GDP + phosphate + H(+). EIF-2 functions in the early steps of protein synthesis by forming a ternary complex with GTP and initiator tRNA. This chain is Translation initiation factor 2 subunit gamma, found in Methanopyrus kandleri (strain AV19 / DSM 6324 / JCM 9639 / NBRC 100938).